A 129-amino-acid chain; its full sequence is MRKIYATGKRKTAIAKVWLTPGKGGLSINEQSLNQWLGGHEAIKMKVMQPLLLTKQEQSVDIKAVVFGGGYSAQAEALRHGISKALNAYDIAFRAILKPKGLLTRDSRVVERKKYGKRKARRSPQFSKR.

The protein belongs to the universal ribosomal protein uS9 family.

The chain is Small ribosomal subunit protein uS9 from Helicobacter pylori (strain HPAG1).